Consider the following 500-residue polypeptide: Probable malate:quinone oxidoreductase (500 aa).

It belongs to the MQO family. FAD serves as cofactor.

The enzyme catalyses (S)-malate + a quinone = a quinol + oxaloacetate. The protein operates within carbohydrate metabolism; tricarboxylic acid cycle; oxaloacetate from (S)-malate (quinone route): step 1/1. The polypeptide is Probable malate:quinone oxidoreductase (Gluconobacter oxydans (strain 621H) (Gluconobacter suboxydans)).